Reading from the N-terminus, the 725-residue chain is Phosphoribosylformylglycinamidine synthase subunit PurL (725 aa).

Histidine 41 is a catalytic residue. 2 residues coordinate ATP: tyrosine 44 and lysine 83. Glutamate 85 is a binding site for Mg(2+). Residues 86–89 (SHNH) and arginine 108 contribute to the substrate site. Histidine 87 functions as the Proton acceptor in the catalytic mechanism. Aspartate 109 provides a ligand contact to Mg(2+). Residue glutamine 231 participates in substrate binding. Residue aspartate 259 coordinates Mg(2+). 303 to 305 (ESQ) is a substrate binding site. Residues aspartate 485 and glycine 522 each coordinate ATP. Asparagine 523 lines the Mg(2+) pocket. Serine 525 serves as a coordination point for substrate.

This sequence belongs to the FGAMS family. As to quaternary structure, monomer. Part of the FGAM synthase complex composed of 1 PurL, 1 PurQ and 2 PurS subunits.

The protein resides in the cytoplasm. The catalysed reaction is N(2)-formyl-N(1)-(5-phospho-beta-D-ribosyl)glycinamide + L-glutamine + ATP + H2O = 2-formamido-N(1)-(5-O-phospho-beta-D-ribosyl)acetamidine + L-glutamate + ADP + phosphate + H(+). It participates in purine metabolism; IMP biosynthesis via de novo pathway; 5-amino-1-(5-phospho-D-ribosyl)imidazole from N(2)-formyl-N(1)-(5-phospho-D-ribosyl)glycinamide: step 1/2. Its function is as follows. Part of the phosphoribosylformylglycinamidine synthase complex involved in the purines biosynthetic pathway. Catalyzes the ATP-dependent conversion of formylglycinamide ribonucleotide (FGAR) and glutamine to yield formylglycinamidine ribonucleotide (FGAM) and glutamate. The FGAM synthase complex is composed of three subunits. PurQ produces an ammonia molecule by converting glutamine to glutamate. PurL transfers the ammonia molecule to FGAR to form FGAM in an ATP-dependent manner. PurS interacts with PurQ and PurL and is thought to assist in the transfer of the ammonia molecule from PurQ to PurL. This chain is Phosphoribosylformylglycinamidine synthase subunit PurL, found in Thermus thermophilus (strain ATCC BAA-163 / DSM 7039 / HB27).